We begin with the raw amino-acid sequence, 173 residues long: Copper transport protein ctr5 (173 aa).

Residues 1-54 lie on the Extracellular side of the membrane; it reads MSLSKMSMSGMSGMGMGSSSNSSAATCRMSMLWNWYIHDSCFLAKSWHINTGNK. Residues 55–75 form a helical membrane-spanning segment; the sequence is FAGSIIGIFFFAVAIEGLSLV. Residues 76–135 are Cytoplasmic-facing; sequence QRMFDRWIVAHSNGKTLSGPLRIFFPSSTVHVTVWQQLIRAAMYSSFYLSATILMLIVMS. Residues 136-156 form a helical membrane-spanning segment; the sequence is FNGYAILFGFVGAWIGFFLFA. Residues 157 to 173 lie on the Extracellular side of the membrane; that stretch reads SDTYGTPSTGTGCCESR.

The protein belongs to the copper transporter (Ctr) (TC 1.A.56) family. SLC31A subfamily. Interacts with ctr4.

It localises to the membrane. In terms of biological role, required for high affinity copper (probably reduced Cu I) transport into the cell. The sequence is that of Copper transport protein ctr5 (ctr5) from Schizosaccharomyces pombe (strain 972 / ATCC 24843) (Fission yeast).